A 213-amino-acid polypeptide reads, in one-letter code: tRNA (guanine-N(7)-)-methyltransferase (213 aa).

Residues glutamate 44, glutamate 69, asparagine 96, and aspartate 118 each coordinate S-adenosyl-L-methionine. Aspartate 118 is a catalytic residue. Lysine 122 provides a ligand contact to substrate. An interaction with RNA region spans residues 124–129 (RHEKRR). Substrate-binding positions include aspartate 154 and 191-194 (TEYE).

The protein belongs to the class I-like SAM-binding methyltransferase superfamily. TrmB family.

It catalyses the reaction guanosine(46) in tRNA + S-adenosyl-L-methionine = N(7)-methylguanosine(46) in tRNA + S-adenosyl-L-homocysteine. It functions in the pathway tRNA modification; N(7)-methylguanine-tRNA biosynthesis. In terms of biological role, catalyzes the formation of N(7)-methylguanine at position 46 (m7G46) in tRNA. The polypeptide is tRNA (guanine-N(7)-)-methyltransferase (Oceanobacillus iheyensis (strain DSM 14371 / CIP 107618 / JCM 11309 / KCTC 3954 / HTE831)).